A 139-amino-acid chain; its full sequence is MNSYFVIALSALFVTLAVGSSLNLSDEQKDLAKQHREQCAEEVKLTEEEKAKVNAKDFNNPTENIKCFANCFFEKVGTLKDGELQESVVLEKLGALIGEEKTKAALEKCRTIKGENKCDTASKLYDCFESFKPAPEAKA.

Residues 1 to 19 (MNSYFVIALSALFVTLAVG) form the signal peptide. The N-linked (GlcNAc...) asparagine glycan is linked to N23. Cystine bridges form between C39/C71, C67/C118, and C109/C127.

It belongs to the PBP/GOBP family. As to expression, expressed in ventral pits of larvae. In adults, it is not specifically expressed in chemosensory organs. Also expressed in stalk cells at the proximal tip of the wing disk.

It is found in the secreted. Functionally, present in the aqueous fluid surrounding olfactory sensory dendrites and are thought to aid in the capture and transport of hydrophobic odorants into and through this fluid. This chain is General odorant-binding protein 56a (Obp56a), found in Drosophila melanogaster (Fruit fly).